The following is a 232-amino-acid chain: RNA chaperone ProQ (232 aa).

Residues 105-182 (EAKARVQAQR…REEQHTPVSD (78 aa)) form a disordered region. The segment covering 117-136 (QQAKKREAAAAAGEKEDAPR) has biased composition (basic and acidic residues). Basic residues predominate over residues 137–146 (RERKPRPTTP). The span at 147 to 177 (RRKEGAERKPRAQKPVEKAPKTVKAPREEQH) shows a compositional bias: basic and acidic residues.

It belongs to the ProQ family.

The protein localises to the cytoplasm. Functionally, RNA chaperone with significant RNA binding, RNA strand exchange and RNA duplexing activities. May regulate ProP activity through an RNA-based, post-transcriptional mechanism. The sequence is that of RNA chaperone ProQ from Shigella flexneri serotype 5b (strain 8401).